Consider the following 135-residue polypeptide: UPF0102 protein RPC_0320 (135 aa).

It belongs to the UPF0102 family.

In Rhodopseudomonas palustris (strain BisB18), this protein is UPF0102 protein RPC_0320.